Consider the following 319-residue polypeptide: MFKFDREQMVVEIAGRKIGGQPGEYPTALAGTIFYARHKIVEDERKGIFDKAAAEDLINKQAEMEDITGNPALVQVFGGTPEALVNYIDFVAEVWDGPMLLDSTSGEARMAAAKRATEAGYAKQCIYNSINVSIDEQEYQVLVESDLEASIVLCFDPMDPTVEGKINVLTNGGKTADKGMLELAEKAGIKYPLIDTAVTPLGNGAGAAVRASFAVKALFGYPVGSGIHNIPSAWDWLREFRKQLREAGEREKAKDIHHVCDVGANLVQVMASGDFVLYGPIDNAYMTFPAVAMVDAIIAEAAKELGIEPIDTHPFKKLV.

The protein belongs to the MtrH family. As to quaternary structure, the complex is composed of 8 subunits; MtrA, MtrB, MtrC, MtrD, MtrE, MtrF, MtrG and MtrH.

The enzyme catalyses 5-methyl-5,6,7,8-tetrahydromethanopterin + coenzyme M + 2 Na(+)(in) = 5,6,7,8-tetrahydromethanopterin + methyl-coenzyme M + 2 Na(+)(out). It participates in one-carbon metabolism; methanogenesis from CO(2); methyl-coenzyme M from 5,10-methylene-5,6,7,8-tetrahydromethanopterin: step 2/2. Part of a complex that catalyzes the formation of methyl-coenzyme M and tetrahydromethanopterin from coenzyme M and methyl-tetrahydromethanopterin. This is an energy-conserving, sodium-ion translocating step. MtrH catalyzes the transfer of the methyl group from methyl-tetrahydromethanopterin to the corrinoid prosthetic group of MtrA. The sequence is that of Tetrahydromethanopterin S-methyltransferase subunit H from Methanocaldococcus jannaschii (strain ATCC 43067 / DSM 2661 / JAL-1 / JCM 10045 / NBRC 100440) (Methanococcus jannaschii).